The sequence spans 152 residues: DNA-binding transcriptional activator DecR (152 aa).

The 62-residue stretch at Leu-2–Gly-63 folds into the HTH asnC-type domain. Residues Leu-21–Lys-40 constitute a DNA-binding region (H-T-H motif).

Plays a role in L-cysteine detoxification. Binds to the dlsT(yhaO)-yhaM operon promoter in the presence but not absence of L-cysteine; activates transcription from the dlsT(yhaO)-yhaM operon. This is DNA-binding transcriptional activator DecR (decR) from Escherichia coli O157:H7.